Reading from the N-terminus, the 348-residue chain is NADH-ubiquinone oxidoreductase chain 2 (348 aa).

11 helical membrane-spanning segments follow: residues 1 to 21, 23 to 43, 56 to 76, 92 to 112, 123 to 143, 148 to 168, 176 to 196, 198 to 218, 242 to 262, 272 to 292, and 321 to 341; these read MMTLILILGIFLGTMTTMFSS, WFFAWLGLEINMMAIIPMMLF, YFISQAVASSTIILASSWNYF, ITLIILALLLKLGLAPLHFWL, MGLIISTWQKLAPLTLLIQVS, NMYILISISVMSVLAGGFGGL, LLAYSSISHMGWIVGVMAVSA, LSWVTTVIYLIINFSIFTILI, CILVLLSLGGLPPFTGFFLKL, SLILMTILLMAGSLISLFFYL, and LLFNLMFLFSILLLPLSPFMI.

It belongs to the complex I subunit 2 family.

It localises to the mitochondrion inner membrane. The catalysed reaction is a ubiquinone + NADH + 5 H(+)(in) = a ubiquinol + NAD(+) + 4 H(+)(out). Its function is as follows. Core subunit of the mitochondrial membrane respiratory chain NADH dehydrogenase (Complex I) that is believed to belong to the minimal assembly required for catalysis. Complex I functions in the transfer of electrons from NADH to the respiratory chain. The immediate electron acceptor for the enzyme is believed to be ubiquinone. This chain is NADH-ubiquinone oxidoreductase chain 2 (MT-ND2), found in Myxine glutinosa (Atlantic hagfish).